The sequence spans 185 residues: MSETAYTPRLRAEYDQSIRSKLTEEFGYANVMQVPRLDKVVLNMGVGEAVNDRKKAEQAAADLGLIAGQKPIITFSRMAISTFKLRENQPIGCKVTLRKAKMYEFIDRLITVALPRVRDFRGLNPKSFDGRGNYSLGIKEHIIFPEIDFDKMGETWGMDITVCTTAKTDDEARALLTAFNFPFRQ.

It belongs to the universal ribosomal protein uL5 family. Part of the 50S ribosomal subunit; part of the 5S rRNA/L5/L18/L25 subcomplex. Contacts the 5S rRNA and the P site tRNA. Forms a bridge to the 30S subunit in the 70S ribosome.

Its function is as follows. This is one of the proteins that bind and probably mediate the attachment of the 5S RNA into the large ribosomal subunit, where it forms part of the central protuberance. In the 70S ribosome it contacts protein S13 of the 30S subunit (bridge B1b), connecting the 2 subunits; this bridge is implicated in subunit movement. Contacts the P site tRNA; the 5S rRNA and some of its associated proteins might help stabilize positioning of ribosome-bound tRNAs. The chain is Large ribosomal subunit protein uL5 from Rhodopseudomonas palustris (strain BisA53).